The following is a 141-amino-acid chain: Nucleoside triphosphatase NudI (141 aa).

The 141-residue stretch at 1–141 folds into the Nudix hydrolase domain; it reads MRQRTIVCPL…RHTLALKGLL (141 aa). Positions 38 to 59 match the Nudix box motif; that stretch reads GGVEPGERIEEALRREIREELG.

It belongs to the Nudix hydrolase family. NudI subfamily. In terms of assembly, monomer. Mg(2+) is required as a cofactor.

The enzyme catalyses a ribonucleoside 5'-triphosphate + H2O = a ribonucleoside 5'-phosphate + diphosphate + H(+). It carries out the reaction a 2'-deoxyribonucleoside 5'-triphosphate + H2O = a 2'-deoxyribonucleoside 5'-phosphate + diphosphate + H(+). The catalysed reaction is dUTP + H2O = dUMP + diphosphate + H(+). It catalyses the reaction dTTP + H2O = dTMP + diphosphate + H(+). The enzyme catalyses dCTP + H2O = dCMP + diphosphate + H(+). In terms of biological role, catalyzes the hydrolysis of nucleoside triphosphates, with a preference for pyrimidine deoxynucleoside triphosphates (dUTP, dTTP and dCTP). This Salmonella paratyphi B (strain ATCC BAA-1250 / SPB7) protein is Nucleoside triphosphatase NudI.